Consider the following 908-residue polypeptide: MADRIYDYKREKTKRVVKKVGFVISILVILAIVFSIAFDLFLELIQIKEIGRNFVSVFWKNFYVKLSVQVVSFMILFFVFFVNNAVIKRNIERIVGKISLLKKNILNVIVSVLLALIASRYLENNLYIKFLTFKHSKPFNIKDPIFNKDVGYYVFERPFFLSIVNFLFYLVIFVCIYTVVLYIVLYGFAFVSRVNSWGVLYDKKVRSHIFFNLILIFVIKIFTLKYEMEGLLYSFFGEVVGVGYTDYYIRMNYFRLSYIVLVAVILLSIYFFIKGKYANIAKVMLSYIGWAVLGTIIATAFQYFVVSPNEQVYERSFLEKNIKFTRLAYNLENIEEKYFPVDTSGTITAEDLQKNTGTIENIRITDYPTTLAILNQIQRFKQYYIFNDADIAKYTINGKIKSVFISAREINYDGIPTKTYINQKFQYTHGYGVVMSLMTEVTPEGQPKFIIKDIPLKSLDGAPKVTQPRIYYGEKTDPYVIVNTKVDEIDYPEGDSNRLFRYDGKGGIRLTPLNRLIFSYVYKDFRLLVSTAINSNSKILINRSIIERAKKVAPFFDYDTDPYILIDGKGHLVWVLDGYTKTNYYPYSEPTEEGFNYIRNSVKVLIDAYNGTLKFYIVDKNDPIVNVYKSIYPDLFENGDIPRDIAEHIRYPEYIFKVQASVLKRYHMTNPNVFYNKEDLWDFGKHKTPDGSIDYIPPYYSVMKLPDSQKEEMILMVPFTPLKYNTMIAWLAAKSSQENYGKLVLYKFPKGSTVYSPLQVENMIDQDPQISKDLSLWNQGGSKVIRGNLLALPINQKILYIEPIYIASDNASALPEVKRVIAACNGKVVMGSSLNDALSQLVGQQVTPVKDQMQTPSQKENITQVLPSSDLLKIKSLFEDAKKALQQGNWEEFGKKFKELDDMMKNVK.

A run of 7 helical transmembrane segments spans residues 22 to 42 (FVISILVILAIVFSIAFDLFL), 62 to 82 (FYVKLSVQVVSFMILFFVFFV), 98 to 118 (ISLLKKNILNVIVSVLLALIA), 166 to 186 (FLFYLVIFVCIYTVVLYIVLY), 208 to 228 (HIFFNLILIFVIKIFTLKYEM), 253 to 273 (YFRLSYIVLVAVILLSIYFFI), and 286 to 306 (SYIGWAVLGTIIATAFQYFVV).

The protein belongs to the UPF0182 family.

It is found in the cell membrane. This chain is UPF0182 protein Csac_0864, found in Caldicellulosiruptor saccharolyticus (strain ATCC 43494 / DSM 8903 / Tp8T 6331).